Reading from the N-terminus, the 346-residue chain is Inositol 2-dehydrogenase/D-chiro-inositol 3-dehydrogenase (346 aa).

The protein belongs to the Gfo/Idh/MocA family. In terms of assembly, homotetramer.

It catalyses the reaction myo-inositol + NAD(+) = scyllo-inosose + NADH + H(+). It carries out the reaction 1D-chiro-inositol + NAD(+) = scyllo-inosine + NADH + H(+). Its pathway is polyol metabolism; myo-inositol degradation into acetyl-CoA; acetyl-CoA from myo-inositol: step 1/7. Its function is as follows. Involved in the oxidation of myo-inositol (MI) and D-chiro-inositol (DCI) to 2-keto-myo-inositol (2KMI or 2-inosose) and 1-keto-D-chiro-inositol (1KDCI), respectively. This Lacticaseibacillus casei (Lactobacillus casei) protein is Inositol 2-dehydrogenase/D-chiro-inositol 3-dehydrogenase.